A 744-amino-acid chain; its full sequence is Prestin (744 aa).

Residues 1-75 are Cytoplasmic-facing; sequence MDHAEENEIL…PITKWLPAYK (75 aa). A helical membrane pass occupies residues 76 to 105; the sequence is FKEYVLGDLVSGISTGVLQLPQGLAFAMLA. Residues 106 to 108 lie on the Extracellular side of the membrane; it reads AVP. The chain crosses the membrane as a helical span at residues 109 to 126; sequence PIFGLYSSFYPVIMYCFL. Over 127–137 the chain is Cytoplasmic; it reads GTSRHISIGPF. Residues 138–151 form a helical membrane-spanning segment; it reads AVISLMIGGVAVRL. Residues 152 to 168 are Extracellular-facing; sequence VPDDIVIPGGVNATNGT. Positions 158-168 match the Involved in motor function motif; the sequence is IPGGVNATNGT. N-linked (GlcNAc...) asparagine glycans are attached at residues Asn-163 and Asn-166. Residues 169–196 traverse the membrane as a helical segment; that stretch reads EARDALRVKVAMSVTLLSGIIQFCLGVC. The Cytoplasmic segment spans residues 197–206; sequence RFGFVAIYLT. The helical transmembrane segment at 207–230 threads the bilayer; the sequence is EPLVRGFTTAAAVHVFTSMLKYLF. Residues 231 to 241 lie on the Extracellular side of the membrane; the sequence is GVKTKRYSGIF. The helical intramembrane region spans 242–253; sequence SVVYSTVAVLQN. Over 254-258 the chain is Extracellular; sequence VKNLN. The helical transmembrane segment at 259–282 threads the bilayer; the sequence is VCSLGVGLMVFGLLLGGKEFNERF. The Cytoplasmic portion of the chain corresponds to 283–291; the sequence is KEKLPAPIP. The chain crosses the membrane as a helical span at residues 292 to 307; that stretch reads LEFFAVVMGTGISAGF. Over 308–332 the chain is Extracellular; that stretch reads NLKESYNVDVVGTLPLGLLPPANPD. A helical transmembrane segment spans residues 333-367; it reads TSLFHLVYVDAIAIAIVGFSVTISMAKTLANKHGY. The Cytoplasmic portion of the chain corresponds to 368–370; it reads QVD. Residues 371–388 form a helical membrane-spanning segment; that stretch reads GNQELIALGLCNSIGSLF. At 389 to 396 the chain is on the extracellular side; the sequence is QTFSISCS. A helical transmembrane segment spans residues 397–406; sequence LSRSLVQEGT. Residue Ser-398 participates in salicylate binding. The Cytoplasmic segment spans residues 407–410; the sequence is GGKT. The chain crosses the membrane as a helical span at residues 411–432; that stretch reads QLAGCLASLMILLVILATGFLF. Topologically, residues 433–436 are extracellular; the sequence is ESLP. The chain crosses the membrane as a helical span at residues 437-464; sequence QAVLSAIVIVNLKGMFMQFSDLPFFWRT. Position 465 (Ser-465) is a topological domain, cytoplasmic. The helical transmembrane segment at 466–481 threads the bilayer; it reads KIELTIWLTTFVSSLF. Residues 482–483 are Extracellular-facing; it reads LG. The chain crosses the membrane as a helical span at residues 484–504; the sequence is LDYGLITAVIIALLTVIYRTQ. Residues 505–718 form an extended region for STAS domain region; the sequence is SPSYKVLGKL…AVLGSQLREA (214 aa). Residues 505–744 lie on the Cytoplasmic side of the membrane; sequence SPSYKVLGKL…PNATPATPEA (240 aa). The region spanning 525–713 is the STAS domain; it reads AYEEVKEIPG…HSIHDAVLGS (189 aa). The disordered stretch occupies residues 718-744; sequence ALAEQEASAPPSQEDLEPNATPATPEA.

The protein belongs to the SLC26A/SulP transporter (TC 2.A.53) family. In terms of assembly, homodimer. Interacts (via STAS domain) with CALM; this interaction is calcium-dependent and the STAS domain interacts with only one lobe of CALM which is an elongated conformation. Interacts with MYH1.

Its subcellular location is the lateral cell membrane. It carries out the reaction 2 hydrogencarbonate(in) + chloride(out) = 2 hydrogencarbonate(out) + chloride(in). Functionally, voltage-sensitive motor protein that drives outer hair cell (OHC) electromotility (eM) and participates in sound amplification in the hearing organ. Converts changes in the transmembrane electric potential into mechanical displacements resulting in the coupling of its expansion to movement of a charged voltage sensor across the lipid membrane. The nature of the voltage sensor is not completely clear, and two models compete. In the first model, acts as an incomplete transporter where intracellular chloride anion acts as extrinsic voltage sensor that drives conformational change in the protein which is sufficient to produce a length change in the plane of the membrane and hence in the length of the OHC. The second model in which multiple charged amino acid residues are distributed at the intracellular and extracellular membrane interfaces that form an intrinsic voltage sensor, whose movement produces the non-linear capacitance (NLC). However, the effective voltage sensor may be the result of a hybrid voltage sensor, assembled from intrinsic charge (charged residues) and extrinsic charge (bound anion). Notably, binding of anions to the anion-binding pocket partially neutralizes the intrinsic positive charge rather than to form an electrically negative sensor, therefore remaining charge may serve as voltage sensor that, after depolarization, moves from down (expanded state) to up (contracted) conformation, which is accompanied by an eccentric contraction of the intermembrane cross-sectional area of the protein as well as a major increase in the hydrophobic thickness of the protein having as consequences the plasma membrane thickening and the cell contraction after membrane depolarization. The anion-binding pocket transits from the inward-open (Down) state, where it is exposed toward the intracellular solvent in the absence of anion, to the occluded (Up) state upon anion binding. Salicylate competes for the anion-binding site and inhibits the voltage-sensor movement, and therefore inhibits the charge transfer and electromotility by displacing Cl(-) from the anion-binding site and by preventing the structural transitions to the contracted state. In addition, can act as a weak Cl(-)/HCO3(-) antiporter across the cell membrane and so regulate the intracellular pH of the outer hair cells (OHCs), while firstly found as being unable to mediate electrogenic anion transport. Moreover, supports a role in cardiac mechanical amplification serving as an elastic element to enhance the actomyosin- based sarcomere contraction system. This is Prestin from Homo sapiens (Human).